Consider the following 158-residue polypeptide: MGRFIFVSFGLLVVFLSLSGTGADFDCIPGWSAYDRYCYQAFSEPKNWEDAESFCEEGVKTSHLVSIESSGEGDFVAQLVAEKIKTSFQYVWIGLRIQNKEQQCRSEWSDASSVNYENLYKQSSKKCYALKKGTELRTWFNVYCGRENPFVCKYTPEC.

Positions 1 to 23 (MGRFIFVSFGLLVVFLSLSGTGA) are cleaved as a signal peptide. Cystine bridges form between Cys-27/Cys-38, Cys-55/Cys-152, and Cys-127/Cys-144. The region spanning 34 to 153 (YDRYCYQAFS…CGRENPFVCK (120 aa)) is the C-type lectin domain.

It belongs to the snaclec family. Tetramer of heterodimers of alpha and beta subunits (alphabeta)(4); disulfide-linked. As to expression, expressed by the venom gland.

Its subcellular location is the secreted. Functionally, platelet-agglutinating factor that acts in a vWF-independent manner. Binds specifically to platelet GPIbalpha (GP1BA) to a distinct binding site from that of flavocetin-A. In Protobothrops mucrosquamatus (Taiwan habu), this protein is Snaclec mucrocetin subunit alpha.